A 719-amino-acid polypeptide reads, in one-letter code: Protein borderless (719 aa).

The first 33 residues, 1-33 (MPAKRSRTFRQSGSALLALLAIILLMNISCTSA), serve as a signal peptide directing secretion. The Extracellular segment spans residues 34 to 650 (ARDHRRQTNL…IDVPSQRKVR (617 aa)). 4 Ig-like domains span residues 40–128 (QTNL…CQVS), 134–241 (PSVR…AFLN), 246–334 (AKVI…PVIS), and 341–429 (PIFS…AELM). Cystine bridges form between C55–C125, C172–C224, C267–C318, and C363–C413. 2 Fibronectin type-III domains span residues 434–527 (APRA…TLPS) and 555–646 (APWN…VPSQ). Residues 651–671 (ALIIGSSVGVIFLLCALCAFL) form a helical membrane-spanning segment. Over 672–719 (YVKRSCLRHLFAKDSSASEDEDTAESGDCDSDEQDQRDRDSIKIRQST) the chain is Cytoplasmic. A disordered region spans residues 685-719 (DSSASEDEDTAESGDCDSDEQDQRDRDSIKIRQST). A compositionally biased stretch (acidic residues) spans 688 to 704 (ASEDEDTAESGDCDSDE). Positions 705–719 (QDQRDRDSIKIRQST) are enriched in basic and acidic residues.

Belongs to the immunoglobulin superfamily. As to quaternary structure, interacts with tutl. In the visual system, expressed in lamina and medulla (at protein level).

It localises to the cell membrane. Its subcellular location is the cell projection. The protein resides in the axon. In terms of biological role, in the developing eye, has a role in axonal targeting of the R7 photoreceptor where it functions together with tutl. Probably mediates homotypic cell adhesion; the effect is inhibited by Lar. The sequence is that of Protein borderless from Drosophila melanogaster (Fruit fly).